The sequence spans 761 residues: MLASSKRMNSSSRSQILLRWKSDKAQSGPYNVEKEILTSRFLRDTETCRQNFRNFPYPDLAGPRKALSQLRELCLKWLRPEIHSKEQILELLVLEQFLTILPGEVRTWVKSQYPESSEEAVTLVEDLTQILEEEAPQNSTLSQDTPEEDPRGKHAFQTGWLNDLVTKESMTFKDVAVDITQEDWELMRPVQKELYKTVTLQNYWNMVSLGLTVYRPTVIPILEEPWMVIKEILEGPSPEWETKAQACTPVEDMSKLTKEETQTIKLEDSYDYDDRLERRATGGFWKIHTNERGFSLKSALSQEYDPTEECLSKYDIYRNNFEKHSNLIVQFDTQLDNKTSVYNEGRATFNHVSYGIVHRKILPGEKPYKCNVCGKKFRKYPSLLKHQSTHAKEKSYECEECGKEFRHISSLIAHQRMHTGEKPYECHQCGKAFSQRAHLTIHQRIHTGEKPYKCDDCGKDFSQRAHLTIHQRTHTGEKPYKCLECGKTFSHSSSLINHQRVHTGEKPYICNECGKTFSQSTHLLQHQKIHTGKKPYKCNECWKVFSQSTYLIRHQRIHSGEKCYKCNECGKAFAHSSTLIQHQTTHTGEKSYICNICGKAFSQSANLTQHHRTHTGEKPYKCSVCGKAFSQSVHLTQHQRIHNGEKPFKCNICGKAYRQGANLTQHQRIHTGEKPYKCNECGKAFIYSSSLNQHQRTHTGERPYKCNECDKDFSQRTCLIQHQRIHTGEKPYACRICGKTFTQSTNLIQHQRVHTGAKHRN.

Residues Arg-49–Leu-131 enclose the SCAN box domain. The disordered stretch occupies residues Glu-134–His-154. The KRAB domain occupies Met-170 to Pro-238. 14 C2H2-type zinc fingers span residues Tyr-368–His-390, Tyr-396–His-418, Tyr-424–His-446, Tyr-452–His-474, Tyr-480–His-502, Tyr-508–His-530, Tyr-536–His-558, Tyr-564–His-586, Tyr-592–His-614, Tyr-620–His-642, Phe-648–His-670, Tyr-676–His-698, Tyr-704–His-726, and Tyr-732–His-754.

The protein belongs to the krueppel C2H2-type zinc-finger protein family.

The protein localises to the nucleus. Functionally, may be involved in transcriptional regulation. The sequence is that of Zinc finger protein 287 from Pongo pygmaeus (Bornean orangutan).